A 266-amino-acid chain; its full sequence is tRNA pseudouridine synthase A (266 aa).

The Nucleophile role is filled by Asp-57. Tyr-115 is a binding site for substrate.

It belongs to the tRNA pseudouridine synthase TruA family. As to quaternary structure, homodimer.

It catalyses the reaction uridine(38/39/40) in tRNA = pseudouridine(38/39/40) in tRNA. In terms of biological role, formation of pseudouridine at positions 38, 39 and 40 in the anticodon stem and loop of transfer RNAs. This is tRNA pseudouridine synthase A from Buchnera aphidicola subsp. Acyrthosiphon pisum (strain APS) (Acyrthosiphon pisum symbiotic bacterium).